A 274-amino-acid polypeptide reads, in one-letter code: Pyridoxal phosphate homeostasis protein (274 aa).

Ser6 is subject to Phosphoserine. Position 47 is an N6-(pyridoxal phosphate)lysine (Lys47). A Phosphotyrosine modification is found at Tyr69. An N6-succinyllysine modification is found at Lys125. 2 positions are modified to phosphoserine: Ser226 and Ser244.

Belongs to the pyridoxal phosphate-binding protein YggS/PROSC family.

Its function is as follows. Pyridoxal 5'-phosphate (PLP)-binding protein, which may be involved in intracellular homeostatic regulation of pyridoxal 5'-phosphate (PLP), the active form of vitamin B6. The chain is Pyridoxal phosphate homeostasis protein from Mus musculus (Mouse).